Consider the following 302-residue polypeptide: 3-methyl-2-oxobutanoate hydroxymethyltransferase 1 (302 aa).

Mg(2+) contacts are provided by D75 and D118. 3-methyl-2-oxobutanoate-binding positions include 75 to 76 (DS), D118, and K147. Mg(2+) is bound at residue E149. The active-site Proton acceptor is the E217.

The protein belongs to the PanB family. As to quaternary structure, homodecamer; pentamer of dimers. Mg(2+) is required as a cofactor.

It is found in the cytoplasm. The catalysed reaction is 3-methyl-2-oxobutanoate + (6R)-5,10-methylene-5,6,7,8-tetrahydrofolate + H2O = 2-dehydropantoate + (6S)-5,6,7,8-tetrahydrofolate. The protein operates within cofactor biosynthesis; (R)-pantothenate biosynthesis; (R)-pantoate from 3-methyl-2-oxobutanoate: step 1/2. In terms of biological role, catalyzes the reversible reaction in which hydroxymethyl group from 5,10-methylenetetrahydrofolate is transferred onto alpha-ketoisovalerate to form ketopantoate. The sequence is that of 3-methyl-2-oxobutanoate hydroxymethyltransferase 1 from Zymomonas mobilis subsp. mobilis (strain ATCC 31821 / ZM4 / CP4).